A 449-amino-acid polypeptide reads, in one-letter code: MFGDLMVFKAYDIRGIYGRELDENFAYSLGKCIGKKFENKKILVGNDVRIGSKELLPYFIVGLKEYADVFYAGTISTPLMYFGTKGKYDLGVILTASHNPPEYTGFKMCDKEAIPLSPIEEIKPIFKKYELTESIKEEAKNLNLDDLKVNIIEEYKKFFLKRCKASDKKIAVDFANGATTIAEKEILNELFDNAVFINDYPDGNFPAHQPDTLKMECLKDIIRAVKKNNCELGLIFDGDGDRLGIVDENGNVLRGDILTAIIAKEILKEKSNAKIVYDLRCSKIVPEIIEKYGGIAIKSRVGHYFIKKLMHEIDAEFAGELSNHFYFKEIGYFESPLLALNYILKAMDEENKSLSELNKEFSKYPHSGEINFRVKDQKYIMEKIKEHFKDCKLEELDGISIYCKNFWFNLRPSNTEPLLRLNLEADDEKTMKEKVEEIKNLIAKLDASL.

The active-site Phosphoserine intermediate is Ser97. Ser97, Asp237, Asp239, and Asp241 together coordinate Mg(2+).

Belongs to the phosphohexose mutase family. It depends on Mg(2+) as a cofactor.

The enzyme catalyses alpha-D-mannose 1-phosphate = D-mannose 6-phosphate. It functions in the pathway amino-acid biosynthesis. Functionally, catalyzes the formation of mannose-1-P from mannose-6-P. Can also use glucose-6-P. This chain is Phosphomannomutase (manB), found in Methanocaldococcus jannaschii (strain ATCC 43067 / DSM 2661 / JAL-1 / JCM 10045 / NBRC 100440) (Methanococcus jannaschii).